Consider the following 527-residue polypeptide: uncharacterized protein (527 aa).

This is an uncharacterized protein from Schizosaccharomyces pombe (strain 972 / ATCC 24843) (Fission yeast).